The chain runs to 411 residues: Peptidyl-prolyl cis-trans isomerase (411 aa).

Serine 2 is subject to N-acetylserine. 2 disordered regions span residues 54–127 and 160–302; these read IIKR…TLSP and NYVK…PKSK. Acidic residues predominate over residues 61-87; the sequence is FEDDDFLGGDFDEDEIDEESSEEEEEE. Serine 80 and serine 81 each carry phosphoserine. Residue threonine 89 is modified to Phosphothreonine. Composition is skewed to acidic residues over residues 103–118 and 173–242; these read ESED…DEFQ and EGED…EEQK. Tyrosine 184 bears the Phosphotyrosine; by CK2 mark. A Phosphoserine; by CK2 modification is found at serine 186. Basic residues predominate over residues 251-260; sequence KSKKEKKRKH. The short motif at 256–271 is the Nuclear localization signal element; sequence KKRKHEEKEEEKKAKK. Basic and acidic residues predominate over residues 261 to 296; the sequence is EEKEEEKKAKKVKKVEFKKDLEEGPTKPKSKKEQDK. Residues 324–411 form the PPIase FKBP-type domain; the sequence is GARVGMRYIG…FDVKLVSMKN (88 aa).

This sequence belongs to the FKBP-type PPIase family. FKBP3/4 subfamily. Interacts with NOP53. Post-translationally, phosphorylated at tyrosine and dephosphorylated by the phosphotyrosine-specific phosphoprotein phosphatase PTP1.

The protein resides in the nucleus. Its subcellular location is the nucleolus. It catalyses the reaction [protein]-peptidylproline (omega=180) = [protein]-peptidylproline (omega=0). With respect to regulation, inhibited by both FK506 and rapamycin. In terms of biological role, proline isomerase that belongs to an abundant class of enzymes that catalyze the cis-trans isomerization of X-Pro peptide bonds and can accelerate the refolding of proline-containing polypeptides. Specifically binds nuclear localization sequences. May be involved in the assembly or folding of ribosomal proteins. The chain is Peptidyl-prolyl cis-trans isomerase from Saccharomyces cerevisiae (strain ATCC 204508 / S288c) (Baker's yeast).